Consider the following 494-residue polypeptide: Guanosine-5'-triphosphate,3'-diphosphate pyrophosphatase (494 aa).

It belongs to the GppA/Ppx family. GppA subfamily.

It carries out the reaction guanosine 3'-diphosphate 5'-triphosphate + H2O = guanosine 3',5'-bis(diphosphate) + phosphate + H(+). It functions in the pathway purine metabolism; ppGpp biosynthesis; ppGpp from GTP: step 2/2. Functionally, catalyzes the conversion of pppGpp to ppGpp. Guanosine pentaphosphate (pppGpp) is a cytoplasmic signaling molecule which together with ppGpp controls the 'stringent response', an adaptive process that allows bacteria to respond to amino acid starvation, resulting in the coordinated regulation of numerous cellular activities. The sequence is that of Guanosine-5'-triphosphate,3'-diphosphate pyrophosphatase from Shigella flexneri serotype 5b (strain 8401).